Reading from the N-terminus, the 241-residue chain is Uridylate kinase (241 aa).

Position 12–15 (12–15 (KLSG)) interacts with ATP. Position 54 (glycine 54) interacts with UMP. 2 residues coordinate ATP: glycine 55 and arginine 59. Residues aspartate 74 and 135–142 (TGNPFFTT) each bind UMP. ATP is bound by residues threonine 162, tyrosine 168, and aspartate 171.

It belongs to the UMP kinase family. Homohexamer.

The protein resides in the cytoplasm. It carries out the reaction UMP + ATP = UDP + ADP. Its pathway is pyrimidine metabolism; CTP biosynthesis via de novo pathway; UDP from UMP (UMPK route): step 1/1. Inhibited by UTP. Functionally, catalyzes the reversible phosphorylation of UMP to UDP. In Magnetococcus marinus (strain ATCC BAA-1437 / JCM 17883 / MC-1), this protein is Uridylate kinase.